Here is a 138-residue protein sequence, read N- to C-terminus: uncharacterized protein (138 aa).

This is an uncharacterized protein from Bacillus subtilis (strain 168).